A 910-amino-acid polypeptide reads, in one-letter code: Constitutive coactivator of peroxisome proliferator-activated receptor gamma (910 aa).

3 disordered regions span residues 333–416, 443–483, and 863–910; these read SDAE…VPMC, SEPR…ESRQ, and SHHA…WRRY. Basic and acidic residues-rich tracts occupy residues 335–351, 360–375, and 396–411; these read AESR…ESRQ and ESRR…EPRQ. The span at 872–890 shows a compositional bias: polar residues; sequence QGSSYHRTGSGYSRSSQGQ. R885 carries the post-translational modification Omega-N-methylarginine. The span at 901–910 shows a compositional bias: basic and acidic residues; the sequence is QYEHDQWRRY.

It belongs to the constitutive coactivator of PPAR-gamma family. Interacts with ESR1 and RXRA. Interacts with PPARG; in a ligand-independent manner. Widely expressed.

It is found in the nucleus. Functions as a transactivator of PPARG and ESR1. Functions in adipogenesis through PPARG activation. This chain is Constitutive coactivator of peroxisome proliferator-activated receptor gamma (FAM120B), found in Homo sapiens (Human).